Consider the following 264-residue polypeptide: S-adenosylmethionine decarboxylase proenzyme (264 aa).

Ser112 acts as the Schiff-base intermediate with substrate; via pyruvic acid in catalysis. At Ser112 the chain carries Pyruvic acid (Ser); by autocatalysis. The active-site Proton acceptor; for processing activity is the His117. The Proton donor; for catalytic activity role is filled by Cys140.

The protein belongs to the prokaryotic AdoMetDC family. Type 2 subfamily. As to quaternary structure, heterooctamer of four alpha and four beta chains arranged as a tetramer of alpha/beta heterodimers. Pyruvate is required as a cofactor. In terms of processing, is synthesized initially as an inactive proenzyme. Formation of the active enzyme involves a self-maturation process in which the active site pyruvoyl group is generated from an internal serine residue via an autocatalytic post-translational modification. Two non-identical subunits are generated from the proenzyme in this reaction, and the pyruvate is formed at the N-terminus of the alpha chain, which is derived from the carboxyl end of the proenzyme. The post-translation cleavage follows an unusual pathway, termed non-hydrolytic serinolysis, in which the side chain hydroxyl group of the serine supplies its oxygen atom to form the C-terminus of the beta chain, while the remainder of the serine residue undergoes an oxidative deamination to produce ammonia and the pyruvoyl group blocking the N-terminus of the alpha chain.

It catalyses the reaction S-adenosyl-L-methionine + H(+) = S-adenosyl 3-(methylsulfanyl)propylamine + CO2. It functions in the pathway amine and polyamine biosynthesis; S-adenosylmethioninamine biosynthesis; S-adenosylmethioninamine from S-adenosyl-L-methionine: step 1/1. In terms of biological role, catalyzes the decarboxylation of S-adenosylmethionine to S-adenosylmethioninamine (dcAdoMet), the propylamine donor required for the synthesis of the polyamines spermine and spermidine from the diamine putrescine. This Salmonella agona (strain SL483) protein is S-adenosylmethionine decarboxylase proenzyme.